The following is a 435-amino-acid chain: Glutamyl-tRNA reductase (435 aa).

Substrate-binding positions include 49–52, Ser109, 114–116, and Gln120; these read TCNR and ETQ. The active-site Nucleophile is Cys50. 189 to 194 lines the NADP(+) pocket; it reads GAGEMS.

The protein belongs to the glutamyl-tRNA reductase family. As to quaternary structure, homodimer.

The catalysed reaction is (S)-4-amino-5-oxopentanoate + tRNA(Glu) + NADP(+) = L-glutamyl-tRNA(Glu) + NADPH + H(+). It functions in the pathway porphyrin-containing compound metabolism; protoporphyrin-IX biosynthesis; 5-aminolevulinate from L-glutamyl-tRNA(Glu): step 1/2. In terms of biological role, catalyzes the NADPH-dependent reduction of glutamyl-tRNA(Glu) to glutamate 1-semialdehyde (GSA). This chain is Glutamyl-tRNA reductase, found in Listeria monocytogenes serotype 4b (strain F2365).